We begin with the raw amino-acid sequence, 204 residues long: ATP phosphoribosyltransferase (204 aa).

This sequence belongs to the ATP phosphoribosyltransferase family. Short subfamily. In terms of assembly, heteromultimer composed of HisG and HisZ subunits.

It localises to the cytoplasm. The enzyme catalyses 1-(5-phospho-beta-D-ribosyl)-ATP + diphosphate = 5-phospho-alpha-D-ribose 1-diphosphate + ATP. Its pathway is amino-acid biosynthesis; L-histidine biosynthesis; L-histidine from 5-phospho-alpha-D-ribose 1-diphosphate: step 1/9. Functionally, catalyzes the condensation of ATP and 5-phosphoribose 1-diphosphate to form N'-(5'-phosphoribosyl)-ATP (PR-ATP). Has a crucial role in the pathway because the rate of histidine biosynthesis seems to be controlled primarily by regulation of HisG enzymatic activity. The chain is ATP phosphoribosyltransferase from Leptospira biflexa serovar Patoc (strain Patoc 1 / Ames).